Here is a 494-residue protein sequence, read N- to C-terminus: Aspartyl/glutamyl-tRNA(Asn/Gln) amidotransferase subunit B (494 aa).

The protein belongs to the GatB/GatE family. GatB subfamily. In terms of assembly, heterotrimer of A, B and C subunits.

The enzyme catalyses L-glutamyl-tRNA(Gln) + L-glutamine + ATP + H2O = L-glutaminyl-tRNA(Gln) + L-glutamate + ADP + phosphate + H(+). It carries out the reaction L-aspartyl-tRNA(Asn) + L-glutamine + ATP + H2O = L-asparaginyl-tRNA(Asn) + L-glutamate + ADP + phosphate + 2 H(+). Allows the formation of correctly charged Asn-tRNA(Asn) or Gln-tRNA(Gln) through the transamidation of misacylated Asp-tRNA(Asn) or Glu-tRNA(Gln) in organisms which lack either or both of asparaginyl-tRNA or glutaminyl-tRNA synthetases. The reaction takes place in the presence of glutamine and ATP through an activated phospho-Asp-tRNA(Asn) or phospho-Glu-tRNA(Gln). In Trichodesmium erythraeum (strain IMS101), this protein is Aspartyl/glutamyl-tRNA(Asn/Gln) amidotransferase subunit B.